The sequence spans 791 residues: Ataxin-1 (791 aa).

A compositionally biased stretch (basic and acidic residues) spans 1 to 30 (MKSNQERSNECLPPKKREIPATSRPSEEKA). Residues 1 to 36 (MKSNQERSNECLPPKKREIPATSRPSEEKATALPSD) form a disordered region. Lysine 16 participates in a covalent cross-link: Glycyl lysine isopeptide (Lys-Gly) (interchain with G-Cter in SUMO). Phosphoserine is present on residues serine 81 and serine 87. 2 disordered regions span residues 187-240 (SQAP…TSPP) and 298-402 (EVLN…HRSY). A Glycyl lysine isopeptide (Lys-Gly) (interchain with G-Cter in SUMO) cross-link involves residue lysine 193. Serine 213 is subject to Phosphoserine. Phosphothreonine is present on threonine 218. 3 stretches are compositionally biased toward polar residues: residues 219–236 (QQNQ…SGRA), 312–327 (ASSS…SSKS), and 362–388 (PNSS…TLND). The residue at position 229 (serine 229) is a Phosphoserine. Positions 470–580 (VGSPDMDTPG…TEDFIQSAEI (111 aa)) are self-association. The tract at residues 514–791 (LVTQAAYPAM…CIEGRSNVGK (278 aa)) is interaction with USP7. The segment at 516–742 (TQAAYPAMVQ…FLSKIEPSKP (227 aa)) is RNA-binding. Residues 538 to 669 (SPTTASPTLP…SLTLKNLKNG (132 aa)) enclose the AXH domain. Glycyl lysine isopeptide (Lys-Gly) (interchain with G-Cter in SUMO) cross-links involve residues lysine 585, lysine 672, and lysine 721. A disordered region spans residues 736 to 774 (KIEPSKPTATRKRRWSAPETRKLEKSEDEPPLTLPKPSL). Serine 751 is subject to Phosphoserine. Residues 770–773 (PKPS) carry the Nuclear localization signal motif.

Belongs to the ATXN1 family. In terms of assembly, homooligomer. Interacts with PQBP1, UBQLN4 and USP7. Interacts with ANP32A. Interacts with CIC. Directly interacts with RBPJ; this interaction is disrupted in the presence of Notch intracellular domain. Interacts with ATXN1L; competes with ATXN1L for RBPJ-binding. Found in a complex with CIC and ATXN1L. Ubiquitinated by UBE3A, leading to its degradation by the proteasome. The presence of poly-Gln repeats in trangenic models developed to replicate phenotypes of the spinocerebellar ataxia 1 disease (SCA1) impair ubiquitination and degradation, leading to accumulation of Atxn1 in neurons and subsequent toxicity. In terms of processing, sumoylation is dependent on nuclear localization and phosphorylation at Ser-751. In terms of tissue distribution, expressed in the cortex and hypothalamus (at protein level). Widely expressed. In brain, the pattern of distribution is limited to neuron populations.

The protein localises to the cytoplasm. Its subcellular location is the nucleus. Its function is as follows. Chromatin-binding factor that repress Notch signaling in the absence of Notch intracellular domain by acting as a CBF1 corepressor. Binds to the HEY promoter and might assist, along with NCOR2, RBPJ-mediated repression. May be involved in RNA metabolism. In concert with CIC and ATXN1L, involved in brain development. The sequence is that of Ataxin-1 (Atxn1) from Mus musculus (Mouse).